We begin with the raw amino-acid sequence, 282 residues long: sn-glycerol-3-phosphate transport system permease protein UgpE (282 aa).

Transmembrane regions (helical) follow at residues 14–34 (LILILGIIIVAFPIYYTFVAS), 86–106 (MAIAVGKIIISFMSAFAIVFF), 112–132 (MFFFWMIFITLMLPVEVRILP), 146–168 (YAGLTLPLMASATATFLFRQFFL), 201–221 (IAALFVILSIYGWTQYLWPLL), and 248–268 (WNYVMVTAILAIIPPILVVVL). Residues 78–269 (LWNSFVVAMA…IPPILVVVLM (192 aa)) form the ABC transmembrane type-1 domain.

Belongs to the binding-protein-dependent transport system permease family. The complex is composed of two ATP-binding proteins (UgpC), two transmembrane proteins (UgpA and UgpE) and a solute-binding protein (UgpB).

The protein resides in the cell inner membrane. Its function is as follows. Part of the ABC transporter complex UgpBAEC involved in sn-glycerol-3-phosphate (G3P) import. Probably responsible for the translocation of the substrate across the membrane. This chain is sn-glycerol-3-phosphate transport system permease protein UgpE (ugpE), found in Brucella suis biovar 1 (strain 1330).